A 293-amino-acid polypeptide reads, in one-letter code: MTTVHQLSGHGPLSRLNIYSGASPYTQRVRPSYELIEAPTRQATNGTGSVSGSPNSSSNSTPANQGSLPSHTNPQLYSSITRKERPELFRSYSGNPRLSKPYASSKLAASSRTASYQAMSYSVSPTSTNSSVATSLNYQSSRETGISKDHWKPDSDVSVCSFPSCSVRFGLFDRRHHCRRCGDIFCALHCDRNIPLTMDVKFCLAGSLYRSCVSCFYEYLKWKQSIDLASSNDITVIESTIAPQQATTHPPSQPKNAVSVPIPKMDSTDSKGELPSESLVLGTVPDNWVWSTF.

A disordered region spans residues 38-75 (APTRQATNGTGSVSGSPNSSSNSTPANQGSLPSHTNPQ). Over residues 44 to 62 (TNGTGSVSGSPNSSSNSTP) the composition is skewed to low complexity. Over residues 63–75 (ANQGSLPSHTNPQ) the composition is skewed to polar residues. The FYVE-type; degenerate zinc-finger motif lies at 156 to 220 (DVSVCSFPSC…SCVSCFYEYL (65 aa)). Zn(2+) is bound by residues Cys-178, Cys-181, Cys-212, and Cys-215. Positions 242–256 (APQQATTHPPSQPKN) are enriched in polar residues. Positions 242 to 276 (APQQATTHPPSQPKNAVSVPIPKMDSTDSKGELPS) are disordered. At Ser-259 the chain carries Phosphoserine.

Interacts with the TORC1 complex when activated by glutamine or cysteine.

It localises to the vacuole membrane. Its activity is regulated as follows. Activated by glutamine. Functions as an intracellular glutamine sensor that directly activates the TORC1 signaling pathway, to promote cell growth when glutamine is available. The protein is Glutamine sensor pib2 of Schizosaccharomyces pombe (strain 972 / ATCC 24843) (Fission yeast).